The sequence spans 525 residues: MKALIAALLLITLQYSCAVSPTDCSAVEPEAEKALDLINKRRRDGYLFQLLRIADAHLDRVENTTVYYLVLDVQESDCSVLSRKYWNDCEPPDSRRPSEIVIGQCKVIATRHSHESQDLRVIDFNCTTSSVSSALANTKDSPVLIDFFEDTERYRKQANKALEKYKEENDDFASFRVDRIERVARVRGGEGTGYFVDFSVRNCPRHHFPRHPNVFGFCRADLFYDVEALDLESPKNLVINCEVFDPQEHENINGVPPHLGHPFHWGGHERSSTTKPPFKPHGSRDHHHPHKPHEHGPPPPPDERDHSHGPPLPQGPPPLLPMSCSSCQHATFGTNGAQRHSHNNNSSDLHPHKHHSHEQHPHGHHPHAHHPHEHDTHRQHPHGHHPHGHHPHGHHPHGHHPHGHHPHCHDFQDYGPCDPPPHNQGHCCHGHGPPPGHLRRRGPGKGPRPFHCRQIGSVYRLPPLRKGEVLPLPEANFPSFPLPHHKHPLKPDNQPFPQSVSESCPGKFKSGFPQVSMFFTHTFPK.

The first 18 residues, 1–18 (MKALIAALLLITLQYSCA), serve as a signal peptide directing secretion. Cystatin domains are found at residues 19–136 (VSPT…SALA) and 137–254 (NTKD…NING). 5 disulfide bridges follow: C24–C504, C78–C89, C105–C126, C203–C417, and C218–C241. Residues 41–84 (RRRDGYLFQLLRIADAHLDRVENTTVYYLVLDVQESDCSVLSRK) form an interaction with ATP5F1A region. The N-linked (GlcNAc...) asparagine glycan is linked to N63. An N-linked (GlcNAc...) asparagine glycan is attached at N125. Positions 252–407 (INGVPPHLGH…GHHPHGHHPH (156 aa)) are disordered. Residues 284 to 293 (RDHHHPHKPH) show a composition bias toward basic residues. A compositionally biased stretch (pro residues) spans 310–320 (PPLPQGPPPLL). Over residues 323–348 (SCSSCQHATFGTNGAQRHSHNNNSSD) the composition is skewed to polar residues. Residues N344 and N345 are each glycosylated (N-linked (GlcNAc...) asparagine). The interval 348–382 (DLHPHKHHSHEQHPHGHHPHAHHPHEHDTHRQHPH) is necessary for endothelial cell focal adhesions and anti-angiogenic activities. 2 stretches are compositionally biased toward basic residues: residues 351–371 (PHKHHSHEQHPHGHHPHAHHP) and 379–407 (QHPHGHHPHGHHPHGHHPHGHHPHGHHPH).

As to quaternary structure, interacts (via the HRR domain) with TPM1; the interaction appears to contribute to the antiangiogenic properties of the HRR domain. Interacts with THBS2; the interaction blocks the antiangiogenic effect of THBS2 with CD36. Interacts with THBS1 (via the TSP type I repeats); the interaction blocks the antiangiogenic effect of THBS1 with CD3. Interacts with PLG (via its Kringle domains); the interaction tethers PLG to the cell surface and enhances its activation. Interacts with HPSE; the interaction is enhanced at acidic pH, partially inhibits binding of HPSE to cell surface receptors and modulates its enzymatic activity. Interacts (via the HRR domain) with TMP1; the interaction partially mediates the antiangiogenic properties of HRG. Interacts with kappa and lambda light chains of IgG molecules. Interacts with ATP5F1A; the interaction occurs on the surface of T-cells and alters their cell morphology in concert with CONA. Binds IgG molecules containing kappa and lambda light chains and inhibits the formation of insoluble immunoglobulin complexes. Interacts with F12; the interaction, which is enhanced in the presence of zinc ions and inhibited by heparin-binding to HRG, inhibits factor XII autoactivation and contact-initiated coagulation. The cofactor is Zn(2+). Proteolytic cleavage produces several HRG fragments which are mostly disulfide-linked and, therefore, not released. Cleavage by plasmin is inhibited in the presence of heparin, zinc ions or in an acidic environment. Cleavage reduces binding of HRG to heparan sulfate, but enhances the ability of HRG to bind and tether plasminogen to the cell surface. On platelet activation, releases a 33 kDa antiangiogenic peptide which encompasses the HRR. Also cleaved in the C-terminal by plasmin. Post-translationally, N-glycosylated. Expressed in macrophages and in malignant cells. Expressed by the liver and secreted in plasma (at protein level).

The protein localises to the secreted. Functionally, plasma glycoprotein that binds a number of ligands such as heme, heparin, heparan sulfate, thrombospondin, plasminogen, and divalent metal ions. Binds heparin and heparin/glycosaminoglycans in a zinc-dependent manner. Binds heparan sulfate on the surface of liver, lung, kidney and heart endothelial cells. Binds to N-sulfated polysaccharide chains on the surface of liver endothelial cells. Inhibits rosette formation. Acts as an adapter protein and is implicated in regulating many processes such as immune complex and pathogen clearance, cell chemotaxis, cell adhesion, angiogenesis, coagulation and fibrinolysis. Mediates clearance of necrotic cells through enhancing the phagocytosis of necrotic cells in a heparan sulfate-dependent pathway. This process can be regulated by the presence of certain HRG ligands such as heparin and zinc ions. Binds to IgG subclasses of immunoglobins containing kappa and lambda light chains with different affinities regulating their clearance and inhibiting the formation of insoluble immune complexes. Tethers plasminogen to the cell surface. Binds T-cells and alters the cell morphology. Modulates angiogenesis by blocking the CD6-mediated antiangiongenic effect of thrombospondins, THBS1 and THBS2. Acts as a regulator of the vascular endothelial growth factor (VEGF) signaling pathway; inhibits endothelial cell motility by reducing VEGF-induced complex formation between PXN/paxillin and ILK/integrin-linked protein kinase and by promoting inhibition of VEGF-induced tyrosine phosphorylation of focal adhesion kinases and alpha-actinins in endothelial cells. Also plays a role in the regulation of tumor angiogenesis and tumor immune surveillance. Normalizes tumor vessels and promotes antitumor immunity by polarizing tumor-associated macrophages, leading to decreased tumor growth and metastasis. The chain is Histidine-rich glycoprotein (HRG) from Homo sapiens (Human).